The sequence spans 203 residues: Dephospho-CoA kinase (203 aa).

Residues Ile4–His201 form the DPCK domain. Gly12–Arg17 contacts ATP.

Belongs to the CoaE family.

The protein localises to the cytoplasm. The catalysed reaction is 3'-dephospho-CoA + ATP = ADP + CoA + H(+). It functions in the pathway cofactor biosynthesis; coenzyme A biosynthesis; CoA from (R)-pantothenate: step 5/5. Functionally, catalyzes the phosphorylation of the 3'-hydroxyl group of dephosphocoenzyme A to form coenzyme A. The sequence is that of Dephospho-CoA kinase from Nitrosomonas europaea (strain ATCC 19718 / CIP 103999 / KCTC 2705 / NBRC 14298).